A 130-amino-acid polypeptide reads, in one-letter code: Calcium-binding protein KRP1 (130 aa).

An EF-hand domain is found at 72-107 (LTDEDVRCMIKEGDFDCDGALNQMEFCVLMFRLSPD). 4 residues coordinate Ca(2+): Asp85, Asp87, Asp89, and Glu96.

Functionally, potential calcium sensor that binds calcium in vitro. This Arabidopsis thaliana (Mouse-ear cress) protein is Calcium-binding protein KRP1.